Reading from the N-terminus, the 323-residue chain is MNFLSAVLTILSSFLITFLLMPSLIKYFRAKKEGQQIRKEGPTWHAKKAGTPTMGGLLFIFSAVVTILWVAAWQGLITNTLWALLFVLVVYGLIGMWDDSIKIFHHQNEGFKPWQKALCQVLAAMVFTVIYQHEGFQMGFGTTQIGWLYGLFIIFWIVGFSNAVNLTDGLDGLVSGLSIISFAAYLIIALVNLNQPGYPEIALFCLAMIGTLLGFFPYNHKPAKIFMGDMGSLAIGASLAAVSLLLHHEWSLLVIGIVYVCETASVILQVASFKTTGKRIFKMTPIHHHFEMSGWSEWKIDIVFWLVGLVAAIIAVTTILLVG.

9 consecutive transmembrane segments (helical) span residues 5–25 (SAVLTILSSFLITFLLMPSLI), 57–77 (LLFIFSAVVTILWVAAWQGLI), 81–101 (LWALLFVLVVYGLIGMWDDSI), 118–138 (LCQVLAAMVFTVIYQHEGFQM), 140–160 (FGTTQIGWLYGLFIIFWIVGF), 173–193 (LVSGLSIISFAAYLIIALVNL), 196–216 (PGYPEIALFCLAMIGTLLGFF), 225–247 (IFMGDMGSLAIGASLAAVSLLLH), and 302–322 (IVFWLVGLVAAIIAVTTILLV).

This sequence belongs to the glycosyltransferase 4 family. MraY subfamily. It depends on Mg(2+) as a cofactor.

The protein resides in the cell membrane. The enzyme catalyses UDP-N-acetyl-alpha-D-muramoyl-L-alanyl-gamma-D-glutamyl-L-lysyl-D-alanyl-D-alanine + di-trans,octa-cis-undecaprenyl phosphate = Mur2Ac(oyl-L-Ala-gamma-D-Glu-L-Lys-D-Ala-D-Ala)-di-trans,octa-cis-undecaprenyl diphosphate + UMP. Its pathway is cell wall biogenesis; peptidoglycan biosynthesis. Its function is as follows. Catalyzes the initial step of the lipid cycle reactions in the biosynthesis of the cell wall peptidoglycan: transfers peptidoglycan precursor phospho-MurNAc-pentapeptide from UDP-MurNAc-pentapeptide onto the lipid carrier undecaprenyl phosphate, yielding undecaprenyl-pyrophosphoryl-MurNAc-pentapeptide, known as lipid I. This Limosilactobacillus reuteri (strain DSM 20016) (Lactobacillus reuteri) protein is Phospho-N-acetylmuramoyl-pentapeptide-transferase.